Reading from the N-terminus, the 154-residue chain is Xanthine-guanine phosphoribosyltransferase (154 aa).

Residues 37-38 (RG), R69, and 88-96 (EDLVDSGDT) each bind 5-phospho-alpha-D-ribose 1-diphosphate. R69 is a binding site for GMP. D89 serves as a coordination point for Mg(2+). D92 and I135 together coordinate guanine. Positions 92 and 135 each coordinate xanthine. GMP is bound by residues 92-96 (DSGDT) and 134-135 (WI).

It belongs to the purine/pyrimidine phosphoribosyltransferase family. XGPT subfamily. Homotetramer. Mg(2+) is required as a cofactor.

It is found in the cell inner membrane. The enzyme catalyses GMP + diphosphate = guanine + 5-phospho-alpha-D-ribose 1-diphosphate. The catalysed reaction is XMP + diphosphate = xanthine + 5-phospho-alpha-D-ribose 1-diphosphate. It carries out the reaction IMP + diphosphate = hypoxanthine + 5-phospho-alpha-D-ribose 1-diphosphate. Its pathway is purine metabolism; GMP biosynthesis via salvage pathway; GMP from guanine: step 1/1. It functions in the pathway purine metabolism; XMP biosynthesis via salvage pathway; XMP from xanthine: step 1/1. Functionally, purine salvage pathway enzyme that catalyzes the transfer of the ribosyl-5-phosphate group from 5-phospho-alpha-D-ribose 1-diphosphate (PRPP) to the N9 position of the 6-oxopurines guanine and xanthine to form the corresponding ribonucleotides GMP (guanosine 5'-monophosphate) and XMP (xanthosine 5'-monophosphate), with the release of PPi. To a lesser extent, also acts on hypoxanthine. This is Xanthine-guanine phosphoribosyltransferase from Vibrio parahaemolyticus serotype O3:K6 (strain RIMD 2210633).